Consider the following 134-residue polypeptide: Large ribosomal subunit protein uL14 (134 aa).

The protein belongs to the universal ribosomal protein uL14 family. Part of the 50S ribosomal subunit. Forms a cluster with proteins L3 and L19. In the 70S ribosome, L14 and L19 interact and together make contacts with the 16S rRNA in bridges B5 and B8.

In terms of biological role, binds to 23S rRNA. Forms part of two intersubunit bridges in the 70S ribosome. This chain is Large ribosomal subunit protein uL14, found in Deinococcus deserti (strain DSM 17065 / CIP 109153 / LMG 22923 / VCD115).